The sequence spans 1748 residues: Flagellar attachment zone protein 1 (1748 aa).

Coiled-coil stretches lie at residues 613–657, 684–864, and 903–1663; these read REQE…KLQK, VTLD…HKVR, and NDHM…SALE. 41 consecutive repeat copies span residues 1012–1025, 1026–1039, 1040–1053, 1054–1067, 1068–1081, 1082–1095, 1096–1109, 1110–1123, 1124–1137, 1138–1151, 1152–1165, 1166–1179, 1180–1193, 1194–1207, 1208–1221, 1222–1235, 1236–1249, 1250–1263, 1264–1277, 1278–1291, 1292–1305, 1306–1319, 1320–1333, 1334–1347, 1348–1361, 1362–1375, 1376–1389, 1390–1403, 1404–1417, 1418–1431, 1432–1445, 1446–1459, 1460–1473, 1474–1487, 1488–1501, 1502–1515, 1516–1529, 1530–1543, 1544–1557, 1558–1571, and 1572–1585. The interval 1012-1529 is 41 X 14 AA tandem repeats of E-E-L-E-L-K-[VA]-A-E-N-E-K-L-A; sequence EELELKAAEN…LKAAENEKLA (518 aa).

Its subcellular location is the cell projection. It localises to the cilium. It is found in the flagellum. A component of FAZ filament that is required for correct FAZ assembly and attachment. Not essential for new flagellum growth. In Trypanosoma brucei gambiense (strain MHOM/CI/86/DAL972), this protein is Flagellar attachment zone protein 1.